Here is a 267-residue protein sequence, read N- to C-terminus: Indole-3-glycerol phosphate synthase (267 aa).

Belongs to the TrpC family.

It catalyses the reaction 1-(2-carboxyphenylamino)-1-deoxy-D-ribulose 5-phosphate + H(+) = (1S,2R)-1-C-(indol-3-yl)glycerol 3-phosphate + CO2 + H2O. The protein operates within amino-acid biosynthesis; L-tryptophan biosynthesis; L-tryptophan from chorismate: step 4/5. This chain is Indole-3-glycerol phosphate synthase, found in Verminephrobacter eiseniae (strain EF01-2).